Consider the following 99-residue polypeptide: N(2)-fixation sustaining protein CowN (99 aa).

It belongs to the CowN family.

In terms of biological role, is required to sustain N(2)-dependent growth in the presence of low levels of carbon monoxide (CO). Probably acts by protecting the N(2) fixation ability of the nitrogenase complex, which is inactivated in the presence of CO. The sequence is that of N(2)-fixation sustaining protein CowN from Magnetococcus marinus (strain ATCC BAA-1437 / JCM 17883 / MC-1).